A 296-amino-acid polypeptide reads, in one-letter code: Polyamine aminopropyltransferase (296 aa).

Residues 16 to 251 (HLWYFEYYTG…GMWSYTFASK (236 aa)) form the PABS domain. Gln46 lines the S-methyl-5'-thioadenosine pocket. 2 residues coordinate spermidine: His77 and Asp101. Residues Glu121 and 152–153 (NG) contribute to the S-methyl-5'-thioadenosine site. Asp170 acts as the Proton acceptor in catalysis. Residue 170-173 (DSTD) coordinates spermidine.

Belongs to the spermidine/spermine synthase family. Homodimer or homotetramer.

The protein localises to the cytoplasm. It catalyses the reaction S-adenosyl 3-(methylsulfanyl)propylamine + putrescine = S-methyl-5'-thioadenosine + spermidine + H(+). It participates in amine and polyamine biosynthesis; spermidine biosynthesis; spermidine from putrescine: step 1/1. Its function is as follows. Catalyzes the irreversible transfer of a propylamine group from the amino donor S-adenosylmethioninamine (decarboxy-AdoMet) to putrescine (1,4-diaminobutane) to yield spermidine. The chain is Polyamine aminopropyltransferase from Thermotoga neapolitana (strain ATCC 49049 / DSM 4359 / NBRC 107923 / NS-E).